A 428-amino-acid chain; its full sequence is Phosphomethylpyrimidine synthase 2 (428 aa).

Residues M94, Y123, H162, 184 to 186 (SRG), 225 to 228 (NGMR), and E264 contribute to the substrate site. H268 contacts Zn(2+). A substrate-binding site is contributed by Y291. Zn(2+) is bound at residue H332. Residues C408, C411, and C415 each coordinate [4Fe-4S] cluster.

Belongs to the ThiC family. [4Fe-4S] cluster serves as cofactor.

It carries out the reaction 5-amino-1-(5-phospho-beta-D-ribosyl)imidazole + S-adenosyl-L-methionine = 4-amino-2-methyl-5-(phosphooxymethyl)pyrimidine + CO + 5'-deoxyadenosine + formate + L-methionine + 3 H(+). It functions in the pathway cofactor biosynthesis; thiamine diphosphate biosynthesis. Functionally, catalyzes the synthesis of the hydroxymethylpyrimidine phosphate (HMP-P) moiety of thiamine from aminoimidazole ribotide (AIR) in a radical S-adenosyl-L-methionine (SAM)-dependent reaction. The polypeptide is Phosphomethylpyrimidine synthase 2 (Methanosarcina acetivorans (strain ATCC 35395 / DSM 2834 / JCM 12185 / C2A)).